A 505-amino-acid polypeptide reads, in one-letter code: ATP synthase subunit beta (505 aa).

Position 157–164 (157–164 (GGAGVGKT)) interacts with ATP.

This sequence belongs to the ATPase alpha/beta chains family. In terms of assembly, F-type ATPases have 2 components, CF(1) - the catalytic core - and CF(0) - the membrane proton channel. CF(1) has five subunits: alpha(3), beta(3), gamma(1), delta(1), epsilon(1). CF(0) has three main subunits: a(1), b(2) and c(9-12). The alpha and beta chains form an alternating ring which encloses part of the gamma chain. CF(1) is attached to CF(0) by a central stalk formed by the gamma and epsilon chains, while a peripheral stalk is formed by the delta and b chains.

The protein localises to the cell inner membrane. It catalyses the reaction ATP + H2O + 4 H(+)(in) = ADP + phosphate + 5 H(+)(out). Produces ATP from ADP in the presence of a proton gradient across the membrane. The catalytic sites are hosted primarily by the beta subunits. In Bacteroides thetaiotaomicron (strain ATCC 29148 / DSM 2079 / JCM 5827 / CCUG 10774 / NCTC 10582 / VPI-5482 / E50), this protein is ATP synthase subunit beta.